The chain runs to 583 residues: Chromosomal replication initiator protein DnaA (583 aa).

The interval Met1 to Leu91 is domain I, interacts with DnaA modulators. Residues Leu91–Ser241 form a domain II region. The interval Lys151–Gly239 is disordered. Residues Glu172 to Asp182 show a composition bias toward basic and acidic residues. The tract at residues Leu242–Cys458 is domain III, AAA+ region. ATP is bound by residues Gly286, Gly288, Lys289, and Thr290. The segment at Ala459–Asp583 is domain IV, binds dsDNA.

It belongs to the DnaA family. In terms of assembly, oligomerizes as a right-handed, spiral filament on DNA at oriC.

The protein localises to the cytoplasm. In terms of biological role, plays an essential role in the initiation and regulation of chromosomal replication. ATP-DnaA binds to the origin of replication (oriC) to initiate formation of the DNA replication initiation complex once per cell cycle. Binds the DnaA box (a 9 base pair repeat at the origin) and separates the double-stranded (ds)DNA. Forms a right-handed helical filament on oriC DNA; dsDNA binds to the exterior of the filament while single-stranded (ss)DNA is stabiized in the filament's interior. The ATP-DnaA-oriC complex binds and stabilizes one strand of the AT-rich DNA unwinding element (DUE), permitting loading of DNA polymerase. After initiation quickly degrades to an ADP-DnaA complex that is not apt for DNA replication. Binds acidic phospholipids. This chain is Chromosomal replication initiator protein DnaA, found in Corynebacterium jeikeium (strain K411).